The following is a 189-amino-acid chain: Large ribosomal subunit protein bL9 (189 aa).

This sequence belongs to the bacterial ribosomal protein bL9 family.

Binds to the 23S rRNA. This Brucella abortus (strain S19) protein is Large ribosomal subunit protein bL9.